Consider the following 472-residue polypeptide: Cysteine--tRNA ligase (472 aa).

C29 lines the Zn(2+) pocket. Residues 31 to 41 (PTVYDFAHIGN) carry the 'HIGH' region motif. Zn(2+) contacts are provided by C227, H252, and E256. Positions 285-289 (KMSKS) match the 'KMSKS' region motif. K288 serves as a coordination point for ATP.

It belongs to the class-I aminoacyl-tRNA synthetase family. As to quaternary structure, monomer. It depends on Zn(2+) as a cofactor.

The protein resides in the cytoplasm. The catalysed reaction is tRNA(Cys) + L-cysteine + ATP = L-cysteinyl-tRNA(Cys) + AMP + diphosphate. This Bradyrhizobium sp. (strain BTAi1 / ATCC BAA-1182) protein is Cysteine--tRNA ligase.